A 328-amino-acid chain; its full sequence is NADH-quinone oxidoreductase subunit H 1 (328 aa).

The next 8 helical transmembrane spans lie at valine 11–phenylalanine 31, leucine 81–proline 101, valine 116–alanine 136, isoleucine 154–valine 174, leucine 189–tryptophan 209, glycine 235–leucine 257, isoleucine 269–isoleucine 289, and valine 308–alanine 328.

This sequence belongs to the complex I subunit 1 family. In terms of assembly, NDH-1 is composed of 14 different subunits. Subunits NuoA, H, J, K, L, M, N constitute the membrane sector of the complex.

The protein localises to the cell membrane. It catalyses the reaction a quinone + NADH + 5 H(+)(in) = a quinol + NAD(+) + 4 H(+)(out). In terms of biological role, NDH-1 shuttles electrons from NADH, via FMN and iron-sulfur (Fe-S) centers, to quinones in the respiratory chain. The immediate electron acceptor for the enzyme in this species is believed to be ubiquinone. Couples the redox reaction to proton translocation (for every two electrons transferred, four hydrogen ions are translocated across the cytoplasmic membrane), and thus conserves the redox energy in a proton gradient. This subunit may bind ubiquinone. This is NADH-quinone oxidoreductase subunit H 1 from Symbiobacterium thermophilum (strain DSM 24528 / JCM 14929 / IAM 14863 / T).